Here is a 429-residue protein sequence, read N- to C-terminus: Histidinol dehydrogenase (429 aa).

Residues tyrosine 131, glutamine 193, and asparagine 216 each contribute to the NAD(+) site. Substrate contacts are provided by serine 239, glutamine 261, and histidine 264. Zn(2+) contacts are provided by glutamine 261 and histidine 264. Residues glutamate 327 and histidine 328 each act as proton acceptor in the active site. Positions 328, 361, 415, and 420 each coordinate substrate. Aspartate 361 provides a ligand contact to Zn(2+). Histidine 420 contacts Zn(2+).

This sequence belongs to the histidinol dehydrogenase family. It depends on Zn(2+) as a cofactor.

The enzyme catalyses L-histidinol + 2 NAD(+) + H2O = L-histidine + 2 NADH + 3 H(+). The protein operates within amino-acid biosynthesis; L-histidine biosynthesis; L-histidine from 5-phospho-alpha-D-ribose 1-diphosphate: step 9/9. Catalyzes the sequential NAD-dependent oxidations of L-histidinol to L-histidinaldehyde and then to L-histidine. This Methanocaldococcus jannaschii (strain ATCC 43067 / DSM 2661 / JAL-1 / JCM 10045 / NBRC 100440) (Methanococcus jannaschii) protein is Histidinol dehydrogenase (hisD).